Reading from the N-terminus, the 168-residue chain is Large ribosomal subunit protein uL10 (168 aa).

Belongs to the universal ribosomal protein uL10 family. Part of the ribosomal stalk of the 50S ribosomal subunit. The N-terminus interacts with L11 and the large rRNA to form the base of the stalk. The C-terminus forms an elongated spine to which L12 dimers bind in a sequential fashion forming a multimeric L10(L12)X complex.

Forms part of the ribosomal stalk, playing a central role in the interaction of the ribosome with GTP-bound translation factors. In Ralstonia nicotianae (strain ATCC BAA-1114 / GMI1000) (Ralstonia solanacearum), this protein is Large ribosomal subunit protein uL10.